We begin with the raw amino-acid sequence, 928 residues long: TBC1 domain family member 2A (928 aa).

M1 is modified (N-acetylmethionine). A compositionally biased stretch (low complexity) spans 1–19; it reads MEGAGENAPESSSSAPGSE. A disordered region spans residues 1 to 39; sequence MEGAGENAPESSSSAPGSEESARDPQVPPPEEESGDCAR. The tract at residues 1–169 is interaction with CADH1; it reads MEGAGENAPE…AGNGPVLHLE (169 aa). A PH domain is found at 45-142; the sequence is PKKLCGYLSK…WLQQLQMKRW (98 aa). Positions 225–275 are disordered; that stretch reads NKQAQGTGHEPPGEDSPQSGEPQREEQPLASDASTPGREPEDSPKPAPKPS. Residues 295 to 433 form an interaction with RAC1 region; the sequence is SEGITRNRTA…KVTQDFTHPP (139 aa). A coiled-coil region spans residues 298–416; sequence ITRNRTAQEK…LMDKNHAKQQ (119 aa). S436 is modified (phosphoserine). Residues 625 to 817 form the Rab-GAP TBC domain; the sequence is GVPREHRPRV…RVWDAFLYEG (193 aa). Positions 875 to 913 form a coiled coil; the sequence is MKQLRQLRMVHRERLEAELRELEQLKAEYLERRASRRRA. Residues S915 and S920 each carry the phosphoserine modification.

In terms of assembly, interacts with activated RAC1 and CDH1. As to expression, expressed in a broad range of tissues, especially in kidney, liver, lung and placenta. Also expressed in keratinocytes and epithelia-containing organs. Isoform 2 is differentially expressed in prostate normal and cancer cells (at protein level).

It is found in the cytoplasm. The protein localises to the cytoplasmic vesicle. Its subcellular location is the cell junction. Functionally, acts as a GTPase-activating protein for RAB7A. Signal effector acting as a linker between RAC1 and RAB7A, leading to RAB7A inactivation and subsequent inhibition of cadherin degradation and reduced cell-cell adhesion. This Homo sapiens (Human) protein is TBC1 domain family member 2A (TBC1D2).